We begin with the raw amino-acid sequence, 300 residues long: D-alanine--D-alanine ligase (300 aa).

An ATP-grasp domain is found at 99-293 (KKILKYANIN…FAELLNSIVK (195 aa)). 126–181 (IEKIGYPVFVKPNSGGSSVATNLVKDKEGIKEAVELALKYDKEVMIENYTKGEEIT) lines the ATP pocket. Mg(2+)-binding residues include Asp-248, Glu-260, and Asn-262.

Belongs to the D-alanine--D-alanine ligase family. Mg(2+) is required as a cofactor. Mn(2+) serves as cofactor.

The protein localises to the cytoplasm. It carries out the reaction 2 D-alanine + ATP = D-alanyl-D-alanine + ADP + phosphate + H(+). The protein operates within cell wall biogenesis; peptidoglycan biosynthesis. Cell wall formation. The protein is D-alanine--D-alanine ligase of Clostridium botulinum (strain ATCC 19397 / Type A).